The following is a 305-amino-acid chain: Aspartate carbamoyltransferase catalytic subunit (305 aa).

R54 and T55 together coordinate carbamoyl phosphate. K83 is a binding site for L-aspartate. R104, H132, and Q135 together coordinate carbamoyl phosphate. R165 and R226 together coordinate L-aspartate. 2 residues coordinate carbamoyl phosphate: L265 and P266.

Belongs to the aspartate/ornithine carbamoyltransferase superfamily. ATCase family. As to quaternary structure, heterooligomer of catalytic and regulatory chains.

It carries out the reaction carbamoyl phosphate + L-aspartate = N-carbamoyl-L-aspartate + phosphate + H(+). It functions in the pathway pyrimidine metabolism; UMP biosynthesis via de novo pathway; (S)-dihydroorotate from bicarbonate: step 2/3. Functionally, catalyzes the condensation of carbamoyl phosphate and aspartate to form carbamoyl aspartate and inorganic phosphate, the committed step in the de novo pyrimidine nucleotide biosynthesis pathway. The protein is Aspartate carbamoyltransferase catalytic subunit of Pyrobaculum calidifontis (strain DSM 21063 / JCM 11548 / VA1).